The sequence spans 94 residues: Small ribosomal subunit protein uS17 (94 aa).

A disordered region spans residues 1 to 22 (MASSSTEGQAAARGRKKSWTGK).

This sequence belongs to the universal ribosomal protein uS17 family. Part of the 30S ribosomal subunit.

Functionally, one of the primary rRNA binding proteins, it binds specifically to the 5'-end of 16S ribosomal RNA. This chain is Small ribosomal subunit protein uS17, found in Chlorobium luteolum (strain DSM 273 / BCRC 81028 / 2530) (Pelodictyon luteolum).